Consider the following 725-residue polypeptide: Calcium-responsive transcription factor (725 aa).

The tract at residues 572–592 (TSPDESPAVVSVNNQPSSSPS) is disordered. Low complexity predominate over residues 577-592 (SPAVVSVNNQPSSSPS).

It localises to the nucleus. Functionally, acts as a transcriptional activator that mediates the calcium- and neuron-selective induction of BDNF exon III transcription. Binds to the consensus calcium-response element CaRE1 5'-CTATTTCGAG-3' sequence. This Homo sapiens (Human) protein is Calcium-responsive transcription factor (CARF).